The chain runs to 151 residues: Non-specific lipid transfer protein GPI-anchored 30 (151 aa).

Residues 1–22 (MMMGMKFFSFYVVLLLVAASSG) form the signal peptide. 4 disulfide bridges follow: Cys-32-Cys-69, Cys-39-Cys-53, Cys-54-Cys-97, and Cys-67-Cys-106. An N-linked (GlcNAc...) asparagine glycan is attached at Asn-44. Ser-120 is lipidated: GPI-anchor amidated serine. Positions 121 to 151 (SSIGNTFSQSYWMTTLAIAATVLSYCHHIIS) are cleaved as a propeptide — removed in mature form.

The protein belongs to the plant LTP family. Expressed in vascular tissues of all organs. Expressed in seedlings, preferentially in hypocotyls and roots. Also observed in siliques.

It localises to the cell membrane. In terms of biological role, lipid transfer protein that promotes the number of phloem (pro)cambial and pericycle cells. This Arabidopsis thaliana (Mouse-ear cress) protein is Non-specific lipid transfer protein GPI-anchored 30.